The following is an 808-amino-acid chain: Sucrose synthase (808 aa).

Positions 271 to 753 are GT-B glycosyltransferase; the sequence is MLFRIALISP…GIERVYSTYT (483 aa).

Belongs to the glycosyltransferase 1 family. As to quaternary structure, probably a homotetramer.

It carries out the reaction an NDP-alpha-D-glucose + D-fructose = a ribonucleoside 5'-diphosphate + sucrose + H(+). The enzyme catalyses ADP-alpha-D-glucose + D-fructose = sucrose + ADP + H(+). Functionally, catalyzes the reversible conversion of sucrose and a nucleotide disphosphate (NDP) into fructose and NDP-glucose; although the reaction is freely reversible in vitro, the physiological reaction seems to be sucrose cleavage. Unlike characterized plant enzymes prefers ADP as a cosubstrate, whereas plants prefer UDP. Its preference for ADP over UDP suggests it may directly link sucrose and glycogen metabolism. This chain is Sucrose synthase, found in Thermosynechococcus vestitus (strain NIES-2133 / IAM M-273 / BP-1).